The following is an 82-amino-acid chain: Photosystem I iron-sulfur center (82 aa).

4Fe-4S ferredoxin-type domains lie at 2–31 (SHTV…MVPW) and 37–68 (GQIA…VRVY). Positions 11, 14, 17, 21, 48, 51, 54, and 58 each coordinate [4Fe-4S] cluster.

As to quaternary structure, the eukaryotic PSI reaction center is composed of at least 11 subunits. The cofactor is [4Fe-4S] cluster.

It is found in the plastid. It localises to the chloroplast thylakoid membrane. It catalyses the reaction reduced [plastocyanin] + hnu + oxidized [2Fe-2S]-[ferredoxin] = oxidized [plastocyanin] + reduced [2Fe-2S]-[ferredoxin]. Apoprotein for the two 4Fe-4S centers FA and FB of photosystem I (PSI); essential for photochemical activity. FB is the terminal electron acceptor of PSI, donating electrons to ferredoxin. The C-terminus interacts with PsaA/B/D and helps assemble the protein into the PSI complex. Required for binding of PsaD and PsaE to PSI. PSI is a plastocyanin/cytochrome c6-ferredoxin oxidoreductase, converting photonic excitation into a charge separation, which transfers an electron from the donor P700 chlorophyll pair to the spectroscopically characterized acceptors A0, A1, FX, FA and FB in turn. The protein is Photosystem I iron-sulfur center of Trieres chinensis (Marine centric diatom).